The following is a 1161-amino-acid chain: DNA-directed RNA polymerase subunit beta (1161 aa).

Belongs to the RNA polymerase beta chain family. In terms of assembly, the RNAP catalytic core consists of 2 alpha, 1 beta, 1 beta' and 1 omega subunit. When a sigma factor is associated with the core the holoenzyme is formed, which can initiate transcription.

It catalyses the reaction RNA(n) + a ribonucleoside 5'-triphosphate = RNA(n+1) + diphosphate. Functionally, DNA-dependent RNA polymerase catalyzes the transcription of DNA into RNA using the four ribonucleoside triphosphates as substrates. This Streptomyces avermitilis (strain ATCC 31267 / DSM 46492 / JCM 5070 / NBRC 14893 / NCIMB 12804 / NRRL 8165 / MA-4680) protein is DNA-directed RNA polymerase subunit beta.